Reading from the N-terminus, the 423-residue chain is Adenosylmethionine-8-amino-7-oxononanoate aminotransferase (423 aa).

Trp-51 is a binding site for substrate. Pyridoxal 5'-phosphate is bound at residue 111-112 (GS). Tyr-144 serves as a coordination point for substrate. Asp-243 lines the pyridoxal 5'-phosphate pocket. Lys-272 and Gly-306 together coordinate substrate. Lys-272 is modified (N6-(pyridoxal phosphate)lysine). Position 307–308 (307–308 (PT)) interacts with pyridoxal 5'-phosphate. Arg-390 serves as a coordination point for substrate.

Belongs to the class-III pyridoxal-phosphate-dependent aminotransferase family. BioA subfamily. In terms of assembly, homodimer. Pyridoxal 5'-phosphate serves as cofactor.

Its subcellular location is the cytoplasm. It carries out the reaction (8S)-8-amino-7-oxononanoate + S-adenosyl-L-methionine = S-adenosyl-4-methylsulfanyl-2-oxobutanoate + (7R,8S)-7,8-diammoniononanoate. The protein operates within cofactor biosynthesis; biotin biosynthesis; 7,8-diaminononanoate from 8-amino-7-oxononanoate (SAM route): step 1/1. Its function is as follows. Catalyzes the transfer of the alpha-amino group from S-adenosyl-L-methionine (SAM) to 7-keto-8-aminopelargonic acid (KAPA) to form 7,8-diaminopelargonic acid (DAPA). It is the only aminotransferase known to utilize SAM as an amino donor. This Corynebacterium glutamicum (strain ATCC 13032 / DSM 20300 / JCM 1318 / BCRC 11384 / CCUG 27702 / LMG 3730 / NBRC 12168 / NCIMB 10025 / NRRL B-2784 / 534) protein is Adenosylmethionine-8-amino-7-oxononanoate aminotransferase.